The chain runs to 34 residues: Somatostatin (34 aa).

Residues 1–20 (AVERPRQDGQVHEPPGRERK) are disordered. A disulfide bond links cysteine 23 and cysteine 34.

It belongs to the somatostatin family.

The protein resides in the secreted. Somatostatin inhibits the release of somatotropin. The sequence is that of Somatostatin (sst) from Myxine glutinosa (Atlantic hagfish).